Reading from the N-terminus, the 208-residue chain is Ribosomal RNA small subunit methyltransferase G (208 aa).

S-adenosyl-L-methionine contacts are provided by residues Gly76, Leu81, 127–128 (VE), and Arg142.

This sequence belongs to the methyltransferase superfamily. RNA methyltransferase RsmG family.

It localises to the cytoplasm. The enzyme catalyses guanosine(527) in 16S rRNA + S-adenosyl-L-methionine = N(7)-methylguanosine(527) in 16S rRNA + S-adenosyl-L-homocysteine. In terms of biological role, specifically methylates the N7 position of guanine in position 527 of 16S rRNA. The chain is Ribosomal RNA small subunit methyltransferase G from Legionella pneumophila subsp. pneumophila (strain Philadelphia 1 / ATCC 33152 / DSM 7513).